Here is a 453-residue protein sequence, read N- to C-terminus: Methylenetetrahydrofolate--tRNA-(uracil-5-)-methyltransferase TrmFO (453 aa).

Residue 10–15 (GGGLAG) participates in FAD binding. A disordered region spans residues 433 to 453 (ELAPWIDSAPPTAVPAAPAAG). Positions 441-453 (APPTAVPAAPAAG) are enriched in low complexity.

Belongs to the MnmG family. TrmFO subfamily. It depends on FAD as a cofactor.

Its subcellular location is the cytoplasm. The catalysed reaction is uridine(54) in tRNA + (6R)-5,10-methylene-5,6,7,8-tetrahydrofolate + NADH + H(+) = 5-methyluridine(54) in tRNA + (6S)-5,6,7,8-tetrahydrofolate + NAD(+). The enzyme catalyses uridine(54) in tRNA + (6R)-5,10-methylene-5,6,7,8-tetrahydrofolate + NADPH + H(+) = 5-methyluridine(54) in tRNA + (6S)-5,6,7,8-tetrahydrofolate + NADP(+). Its function is as follows. Catalyzes the folate-dependent formation of 5-methyl-uridine at position 54 (M-5-U54) in all tRNAs. The chain is Methylenetetrahydrofolate--tRNA-(uracil-5-)-methyltransferase TrmFO from Anaeromyxobacter dehalogenans (strain 2CP-1 / ATCC BAA-258).